Reading from the N-terminus, the 419-residue chain is UDP-N-acetylglucosamine 1-carboxyvinyltransferase (419 aa).

22–23 lines the phosphoenolpyruvate pocket; the sequence is KN. Arg95 is a binding site for UDP-N-acetyl-alpha-D-glucosamine. The Proton donor role is filled by Cys119. Cys119 carries the 2-(S-cysteinyl)pyruvic acid O-phosphothioketal modification. UDP-N-acetyl-alpha-D-glucosamine-binding positions include 164-167, Asp308, and Ile330; that span reads KVSV.

Belongs to the EPSP synthase family. MurA subfamily.

The protein resides in the cytoplasm. It catalyses the reaction phosphoenolpyruvate + UDP-N-acetyl-alpha-D-glucosamine = UDP-N-acetyl-3-O-(1-carboxyvinyl)-alpha-D-glucosamine + phosphate. Its pathway is cell wall biogenesis; peptidoglycan biosynthesis. Functionally, cell wall formation. Adds enolpyruvyl to UDP-N-acetylglucosamine. The chain is UDP-N-acetylglucosamine 1-carboxyvinyltransferase from Rickettsia akari (strain Hartford).